We begin with the raw amino-acid sequence, 247 residues long: Uridylate kinase (247 aa).

ATP is bound at residue 14 to 17 (KLSG). The interval 22 to 27 (GERGVG) is involved in allosteric activation by GTP. Gly-56 is a UMP binding site. Positions 57 and 61 each coordinate ATP. UMP-binding positions include Asp-76 and 137–144 (IGSPYFST). 3 residues coordinate ATP: Asn-165, Tyr-171, and Asp-174.

Belongs to the UMP kinase family. In terms of assembly, homohexamer.

Its subcellular location is the cytoplasm. It carries out the reaction UMP + ATP = UDP + ADP. It participates in pyrimidine metabolism; CTP biosynthesis via de novo pathway; UDP from UMP (UMPK route): step 1/1. Allosterically activated by GTP. Inhibited by UTP, 5-bromo-UTP and 5-iodo-UTP. Catalyzes the reversible phosphorylation of UMP to UDP, with ATP as the most efficient phosphate donor. The chain is Uridylate kinase (pyrH) from Streptococcus pneumoniae serotype 4 (strain ATCC BAA-334 / TIGR4).